Consider the following 62-residue polypeptide: Potassium channel toxin alpha-KTx Tx308 (62 aa).

Residues M1–A18 form the signal peptide. 3 cysteine pairs are disulfide-bonded: C28–C46, C33–C59, and C37–C61.

This sequence belongs to the short scorpion toxin superfamily. Potassium channel inhibitor family. Alpha-KTx 23 subfamily. As to expression, expressed by the venom gland.

It is found in the secreted. Its function is as follows. May block potassium channels. This chain is Potassium channel toxin alpha-KTx Tx308, found in Buthus israelis (Israeli scorpion).